Here is a 294-residue protein sequence, read N- to C-terminus: Acetylglutamate kinase (294 aa).

Substrate-binding positions include 67–68 (GG), Arg89, and Asn193.

Belongs to the acetylglutamate kinase family. ArgB subfamily.

The protein localises to the cytoplasm. It catalyses the reaction N-acetyl-L-glutamate + ATP = N-acetyl-L-glutamyl 5-phosphate + ADP. The protein operates within amino-acid biosynthesis; L-arginine biosynthesis; N(2)-acetyl-L-ornithine from L-glutamate: step 2/4. Catalyzes the ATP-dependent phosphorylation of N-acetyl-L-glutamate. This Leptospira interrogans serogroup Icterohaemorrhagiae serovar copenhageni (strain Fiocruz L1-130) protein is Acetylglutamate kinase.